The primary structure comprises 753 residues: Nuclear hormone receptor family member daf-12 (753 aa).

The segment at 1 to 109 (MGTNGGVIAE…PDDGLLDSSE (109 aa)) is disordered. Residues 20–29 (NPDKVEEPVV) show a composition bias toward basic and acidic residues. Residues 30-44 (RRKRVTRRRHRRIHS) show a composition bias toward basic residues. Positions 115-190 (QKTCRVCGDH…VGMKKEWILN (76 aa)) form a DNA-binding region, nuclear receptor. 2 NR C4-type zinc fingers span residues 118–138 (CRVC…CESC) and 154–173 (CPYS…CQKC). The Nuclear localization signal signature appears at 191-206 (EEQLRRRKNSRLNNTG). 3 disordered regions span residues 198–251 (KNSR…TINP), 266–314 (NAMP…GYDP), and 376–410 (GHPM…EKNH). Residues 201–211 (RLNNTGTCNKR) are compositionally biased toward polar residues. The span at 212–227 (SQPGNQQSPQGPNQQP) shows a compositional bias: low complexity. Polar residues-rich tracts occupy residues 285–301 (PVGS…SLTM) and 394–410 (MSLS…EKNH). Residues 516 to 753 (AELKALDAVR…ELPGEFFKIK (238 aa)) form the NR LBD domain.

The protein belongs to the nuclear hormone receptor family. Interacts with din-1 isoform d. As to expression, expressed throughout muscles of the pharynx. Expressed in epidermal seam cells, the vulva, head neurons, mature spermatheca, uterus and intestine.

It localises to the nucleus. Its function is as follows. Nuclear receptor which binds directly to response elements in target gene promoters. Activity is modulated by binding of steroid hormone ligands that include dafachronic acids. Regulates expression of genes involved in postembryonic development and the dauer diapause, in response to environmental cues. Inhibits the expression of let-7 family members when bound to corepressor din-1s which is an isoform of din-1. Plays a role in controlling the timing of seam cell development during the larval stages. Has a role in the immune response to bacterial infection, via regulation of let-7 miRNAs. Controls expression of genes that promote the aerobic catabolism of fatty acids for reproductive growth. May be involved in thermotolerance. The protein is Nuclear hormone receptor family member daf-12 of Caenorhabditis elegans.